Reading from the N-terminus, the 1443-residue chain is Cleavage and polyadenylation specificity factor subunit 1 (1443 aa).

Disordered regions lie at residues 404-435 (PASAVREAADKEEPPSKKKRVDATAGWSAAGK), 546-570 (EEDNPKGEGTEQEPSTTPEADDDGR), 715-777 (GGAR…PAPF), and 901-921 (FREKKPKPSKKKAEGGGAEEG). Residues 410–419 (EAADKEEPPS) show a composition bias toward basic and acidic residues. Phosphoserine occurs at positions 756 and 766. The segment covering 758–775 (SKEEARRSSQPPADRDPA) has biased composition (basic and acidic residues). Positions 893 to 908 (KKVPHNINFREKKPKP) match the Nuclear localization signal motif.

It belongs to the CPSF1 family. Component of the cleavage and polyadenylation specificity factor (CPSF) complex, composed of CPSF1, CPSF2, CPSF3, CPSF4 and FIP1L1. Found in a complex with CPSF1, FIP1L1 and PAPOLA. Interacts with FIP1L1, TENT2/GLD2 and SRRM1. Interacts with TUT1; the interaction is direct and mediates the recruitment of the CPSF complex on the 3'UTR of selected pre-mRNAs. Post-translationally, the N-terminus is blocked. In terms of tissue distribution, widely expressed, with high expression in the retina.

Its subcellular location is the nucleus. It localises to the nucleoplasm. In terms of biological role, component of the cleavage and polyadenylation specificity factor (CPSF) complex that plays a key role in pre-mRNA 3'-end formation, recognizing the AAUAAA signal sequence and interacting with poly(A) polymerase and other factors to bring about cleavage and poly(A) addition. This subunit is involved in the RNA recognition step of the polyadenylation reaction. May play a role in eye morphogenesis and the development of retinal ganglion cell projections to the midbrain. The polypeptide is Cleavage and polyadenylation specificity factor subunit 1 (CPSF1) (Homo sapiens (Human)).